We begin with the raw amino-acid sequence, 258 residues long: Sugar fermentation stimulation protein homolog (258 aa).

It belongs to the SfsA family.

This Marinomonas sp. (strain MWYL1) protein is Sugar fermentation stimulation protein homolog.